The primary structure comprises 498 residues: Beta-1,3-glucosyltransferase (498 aa).

At 1–6 (MRPPAC) the chain is on the cytoplasmic side. The helical; Signal-anchor for type II membrane protein transmembrane segment at 7–27 (WWLLAPPALLALLTCSLAFGL) threads the bilayer. Residues 28–498 (ASEDTKKEVK…ETQKGFREEL (471 aa)) lie on the Lumenal side of the membrane. N-linked (GlcNAc...) asparagine glycosylation is present at Asn336. The Prevents secretion from ER signature appears at 495–498 (REEL).

This sequence belongs to the glycosyltransferase 31 family. As to expression, widely expressed, with highest levels in testis and uterus.

The protein resides in the endoplasmic reticulum membrane. It participates in protein modification; protein glycosylation. In terms of biological role, O-glucosyltransferase that transfers glucose toward fucose with a beta-1,3 linkage. Specifically glucosylates O-linked fucosylglycan on TSP type-1 domains of proteins, thereby contributing to elongation of O-fucosylglycan. The chain is Beta-1,3-glucosyltransferase from Homo sapiens (Human).